The sequence spans 103 residues: Large ribosomal subunit protein bL21 (103 aa).

Belongs to the bacterial ribosomal protein bL21 family. As to quaternary structure, part of the 50S ribosomal subunit. Contacts protein L20.

Functionally, this protein binds to 23S rRNA in the presence of protein L20. This is Large ribosomal subunit protein bL21 from Lactobacillus delbrueckii subsp. bulgaricus (strain ATCC 11842 / DSM 20081 / BCRC 10696 / JCM 1002 / NBRC 13953 / NCIMB 11778 / NCTC 12712 / WDCM 00102 / Lb 14).